The following is a 476-amino-acid chain: Glycogen synthase (476 aa).

ADP-alpha-D-glucose is bound at residue Lys-15.

This sequence belongs to the glycosyltransferase 1 family. Bacterial/plant glycogen synthase subfamily.

It carries out the reaction [(1-&gt;4)-alpha-D-glucosyl](n) + ADP-alpha-D-glucose = [(1-&gt;4)-alpha-D-glucosyl](n+1) + ADP + H(+). Its pathway is glycan biosynthesis; glycogen biosynthesis. Synthesizes alpha-1,4-glucan chains using ADP-glucose. In Streptococcus gordonii (strain Challis / ATCC 35105 / BCRC 15272 / CH1 / DL1 / V288), this protein is Glycogen synthase.